Consider the following 177-residue polypeptide: MPIKSRIRAIPDYPKKGIMFRDITTLIKDPVGFRLVIDGLTQRYLENGVDFDVVVGVEARGFILGSALAYTLGKGFVPVRKPGKLPADVVSQEYELEYGTDKVEIHLDAILPGTRVLLVDDLLATGGTALAAAALVEKVGGVVAEMAFIVNLPDIGGERKILDKGYRVFSLTEFEGE.

It belongs to the purine/pyrimidine phosphoribosyltransferase family. As to quaternary structure, homodimer.

The protein localises to the cytoplasm. It carries out the reaction AMP + diphosphate = 5-phospho-alpha-D-ribose 1-diphosphate + adenine. The protein operates within purine metabolism; AMP biosynthesis via salvage pathway; AMP from adenine: step 1/1. Its function is as follows. Catalyzes a salvage reaction resulting in the formation of AMP, that is energically less costly than de novo synthesis. The polypeptide is Adenine phosphoribosyltransferase (Chlorobium phaeovibrioides (strain DSM 265 / 1930) (Prosthecochloris vibrioformis (strain DSM 265))).